The sequence spans 540 residues: DNA topoisomerase 1 (540 aa).

One can recognise a Toprim domain in the interval 1 to 110; it reads MELFIVESPT…NIKRAVFYEI (110 aa). Mg(2+) is bound by residues Glu-7 and Asp-79. One can recognise a Topo IA-type catalytic domain in the interval 126-536; that stretch reads NMNLVYAQFA…FMEKIFGKEL (411 aa). The tract at residues 161–166 is interaction with DNA; it reads SAGRVQ. Catalysis depends on Tyr-281, which acts as the O-(5'-phospho-DNA)-tyrosine intermediate.

This sequence belongs to the type IA topoisomerase family. As to quaternary structure, monomer. Requires Mg(2+) as cofactor.

It catalyses the reaction ATP-independent breakage of single-stranded DNA, followed by passage and rejoining.. Releases the supercoiling and torsional tension of DNA, which is introduced during the DNA replication and transcription, by transiently cleaving and rejoining one strand of the DNA duplex. Introduces a single-strand break via transesterification at a target site in duplex DNA. The scissile phosphodiester is attacked by the catalytic tyrosine of the enzyme, resulting in the formation of a DNA-(5'-phosphotyrosyl)-enzyme intermediate and the expulsion of a 3'-OH DNA strand. The free DNA strand then undergoes passage around the unbroken strand, thus removing DNA supercoils. Finally, in the religation step, the DNA 3'-OH attacks the covalent intermediate to expel the active-site tyrosine and restore the DNA phosphodiester backbone. The protein is DNA topoisomerase 1 of Aquifex aeolicus (strain VF5).